Consider the following 305-residue polypeptide: Protoheme IX farnesyltransferase (305 aa).

9 consecutive transmembrane segments (helical) span residues 28–48 (IIEL…QGVP), 52–72 (LVLL…ALNM), 101–121 (LAFG…TVNW), 122–142 (LSAW…TMIL), 149–169 (NIVW…SSVT), 174–194 (WAPV…YWPL), 218–238 (VVAR…LLLT), 240–260 (LGYT…FWLW), and 283–303 (LFHW…VDPF).

The protein belongs to the UbiA prenyltransferase family. Protoheme IX farnesyltransferase subfamily.

It is found in the cell membrane. The enzyme catalyses heme b + (2E,6E)-farnesyl diphosphate + H2O = Fe(II)-heme o + diphosphate. It functions in the pathway porphyrin-containing compound metabolism; heme O biosynthesis; heme O from protoheme: step 1/1. In terms of biological role, converts heme B (protoheme IX) to heme O by substitution of the vinyl group on carbon 2 of heme B porphyrin ring with a hydroxyethyl farnesyl side group. The protein is Protoheme IX farnesyltransferase of Streptomyces avermitilis (strain ATCC 31267 / DSM 46492 / JCM 5070 / NBRC 14893 / NCIMB 12804 / NRRL 8165 / MA-4680).